Here is a 213-residue protein sequence, read N- to C-terminus: Succinate dehydrogenase subunit 3-1, mitochondrial (213 aa).

The transit peptide at 1 to 105 directs the protein to the mitochondrion; sequence MAATALFRSI…LDVGTSKRLF (105 aa). Histidine 130 lines the heme pocket. A helical transmembrane segment spans residues 148-165; that stretch reads ISGVYLTGVTFAGYLLYL.

As to quaternary structure, component of complex II composed of eight subunits in plants: four classical SDH subunits SDH1, SDH2, SDH3 and SDH4 (a flavoprotein (FP), an iron-sulfur protein (IP), and a cytochrome b composed of a large and a small subunit.), as well as four subunits unknown in mitochondria from bacteria and heterotrophic eukaryotes. It depends on heme as a cofactor. As to expression, expressed in flowers, inflorescences and stems.

The protein resides in the mitochondrion inner membrane. It participates in carbohydrate metabolism; tricarboxylic acid cycle. In terms of biological role, membrane-anchoring subunit of succinate dehydrogenase (SDH). This chain is Succinate dehydrogenase subunit 3-1, mitochondrial, found in Arabidopsis thaliana (Mouse-ear cress).